Reading from the N-terminus, the 1276-residue chain is Probable outer membrane protein pmp6 (1276 aa).

Positions 1-23 (MKYSLPWLLTSSALVFSLHPLMA) are cleaved as a signal peptide. Residues 981–1276 (DAPSHPGIWI…NANCGTRYSF (296 aa)) form the Autotransporter domain.

This sequence belongs to the PMP outer membrane protein family.

It is found in the secreted. Its subcellular location is the cell wall. The protein resides in the cell outer membrane. This is Probable outer membrane protein pmp6 (pmp6) from Chlamydia pneumoniae (Chlamydophila pneumoniae).